A 331-amino-acid chain; its full sequence is Glycerol-3-phosphate dehydrogenase [NAD(P)+] (331 aa).

NADPH contacts are provided by W13, R33, and K103. Residues K103, G131, and T133 each contribute to the sn-glycerol 3-phosphate site. Residue A135 participates in NADPH binding. Sn-glycerol 3-phosphate-binding residues include K187, D240, S250, R251, and N252. K187 serves as the catalytic Proton acceptor. Residue R251 coordinates NADPH. NADPH is bound by residues V275 and E277.

This sequence belongs to the NAD-dependent glycerol-3-phosphate dehydrogenase family.

It is found in the cytoplasm. The catalysed reaction is sn-glycerol 3-phosphate + NAD(+) = dihydroxyacetone phosphate + NADH + H(+). It catalyses the reaction sn-glycerol 3-phosphate + NADP(+) = dihydroxyacetone phosphate + NADPH + H(+). It functions in the pathway membrane lipid metabolism; glycerophospholipid metabolism. Its function is as follows. Catalyzes the reduction of the glycolytic intermediate dihydroxyacetone phosphate (DHAP) to sn-glycerol 3-phosphate (G3P), the key precursor for phospholipid synthesis. This chain is Glycerol-3-phosphate dehydrogenase [NAD(P)+], found in Novosphingobium aromaticivorans (strain ATCC 700278 / DSM 12444 / CCUG 56034 / CIP 105152 / NBRC 16084 / F199).